The primary structure comprises 521 residues: Bifunctional purine biosynthesis protein PurH (521 aa).

The 145-residue stretch at 1–145 (MIKQALISVS…KNHRDVTVVV (145 aa)) folds into the MGS-like domain.

This sequence belongs to the PurH family.

The enzyme catalyses (6R)-10-formyltetrahydrofolate + 5-amino-1-(5-phospho-beta-D-ribosyl)imidazole-4-carboxamide = 5-formamido-1-(5-phospho-D-ribosyl)imidazole-4-carboxamide + (6S)-5,6,7,8-tetrahydrofolate. It catalyses the reaction IMP + H2O = 5-formamido-1-(5-phospho-D-ribosyl)imidazole-4-carboxamide. It participates in purine metabolism; IMP biosynthesis via de novo pathway; 5-formamido-1-(5-phospho-D-ribosyl)imidazole-4-carboxamide from 5-amino-1-(5-phospho-D-ribosyl)imidazole-4-carboxamide (10-formyl THF route): step 1/1. It functions in the pathway purine metabolism; IMP biosynthesis via de novo pathway; IMP from 5-formamido-1-(5-phospho-D-ribosyl)imidazole-4-carboxamide: step 1/1. The polypeptide is Bifunctional purine biosynthesis protein PurH (Paraburkholderia xenovorans (strain LB400)).